A 314-amino-acid chain; its full sequence is D-alanine--D-alanine ligase (314 aa).

The ATP-grasp domain maps to Lys112–Asp307. An ATP-binding site is contributed by Ala138 to Thr193. The Mg(2+) site is built by Asp261, Glu274, and Asn276.

This sequence belongs to the D-alanine--D-alanine ligase family. The cofactor is Mg(2+). Mn(2+) serves as cofactor.

It is found in the cytoplasm. The enzyme catalyses 2 D-alanine + ATP = D-alanyl-D-alanine + ADP + phosphate + H(+). It participates in cell wall biogenesis; peptidoglycan biosynthesis. Functionally, cell wall formation. The protein is D-alanine--D-alanine ligase of Stutzerimonas stutzeri (strain A1501) (Pseudomonas stutzeri).